The sequence spans 631 residues: Quinoprotein alcohol dehydrogenase PedE (631 aa).

Positions 1-33 (MTIRSLPALSPLALSVRVLLMAGSLALGNVATA) are cleaved as a signal peptide. Residues D53, T56, and D59 each contribute to the Ca(2+) site. E103 contacts pyrroloquinoline quinone. C147 and C148 are joined by a disulfide. Pyrroloquinoline quinone is bound by residues R153, T197, and 215–217 (HGS). Residue E221 participates in Ca(2+) binding. The disordered stretch occupies residues 250 to 286 (GRLNGKDSTPTGDVKAPSWPDDPTTETGKVEAWSHGG). Residues N308 and D358 each contribute to the Ca(2+) site. The Proton acceptor role is filled by D358. R386 contacts pyrroloquinoline quinone. The segment at 421-443 (GRPVENPGQRPAKPLPGETKGKP) is disordered. Pyrroloquinoline quinone-binding residues include W531 and A595.

The protein belongs to the bacterial PQQ dehydrogenase family. In terms of assembly, homodimer. Interacts with cytochrome c550. Pyrroloquinoline quinone is required as a cofactor. Requires Ca(2+) as cofactor. Post-translationally, the disulfide ring formed between the two adjacent cysteine residues Cys-147 and Cys-148 is essential for efficient electron transfer at pH 7 from PedE to its natural electron acceptor cytochrome c550.

Its subcellular location is the periplasm. It catalyses the reaction a primary alcohol + 2 Fe(III)-[cytochrome c] = an aldehyde + 2 Fe(II)-[cytochrome c] + 2 H(+). It carries out the reaction ethanol + 2 Fe(III)-[cytochrome c] = acetaldehyde + 2 Fe(II)-[cytochrome c] + 2 H(+). The catalysed reaction is butan-1-ol + 2 Fe(III)-[cytochrome c] = butanal + 2 Fe(II)-[cytochrome c] + 2 H(+). The enzyme catalyses butan-2-ol + 2 Fe(III)-[cytochrome c] = butan-2-one + 2 Fe(II)-[cytochrome c] + 2 H(+). It catalyses the reaction 2-phenylethanol + 2 Fe(III)-[cytochrome c] = 2-phenylacetaldehyde + 2 Fe(II)-[cytochrome c] + 2 H(+). It carries out the reaction octan-1-ol + 2 Fe(III)-[cytochrome c] = octanal + 2 Fe(II)-[cytochrome c] + 2 H(+). The catalysed reaction is hexan-1-ol + 2 Fe(III)-[cytochrome c] = hexanal + 2 Fe(II)-[cytochrome c] + 2 H(+). The enzyme catalyses cinnamyl alcohol + 2 Fe(III)-[cytochrome c] = cinnamaldehyde + 2 Fe(II)-[cytochrome c] + 2 H(+). It catalyses the reaction farnesol + 2 Fe(III)-[cytochrome c] = farnesal + 2 Fe(II)-[cytochrome c] + 2 H(+). It carries out the reaction an aldehyde + 2 Fe(III)-[cytochrome c] + H2O = a carboxylate + 2 Fe(II)-[cytochrome c] + 3 H(+). The catalysed reaction is acetaldehyde + 2 Fe(III)-[cytochrome c] + H2O = 2 Fe(II)-[cytochrome c] + acetate + 3 H(+). The enzyme catalyses butanal + 2 Fe(III)-[cytochrome c] + H2O = butanoate + 2 Fe(II)-[cytochrome c] + 3 H(+). It catalyses the reaction hexanal + 2 Fe(III)-[cytochrome c] + H2O = hexanoate + 2 Fe(II)-[cytochrome c] + 3 H(+). It carries out the reaction octanal + 2 Fe(III)-[cytochrome c] + H2O = octanoate + 2 Fe(II)-[cytochrome c] + 3 H(+). Its function is as follows. Alcohol dehydrogenase that catalyzes the oxidation of a range of substrates, including linear and aromatic primary and secondary alcohols, as well as aldehydes, allowing bacterial growth with a variety of volatile organic compounds (VOCs) as carbon and energy sources. Uses a specific inducible cytochrome c550, encoded by the adjacent gene in the locus, as electron acceptor. The polypeptide is Quinoprotein alcohol dehydrogenase PedE (Pseudomonas putida (strain ATCC 47054 / DSM 6125 / CFBP 8728 / NCIMB 11950 / KT2440)).